Consider the following 452-residue polypeptide: Protein EARLY-RESPONSIVE TO DEHYDRATION 7, chloroplastic (452 aa).

Polar residues predominate over residues 1 to 18 (MESSGDKQTSSLYPTVDT). The N-terminal 28 residues, 1 to 28 (MESSGDKQTSSLYPTVDTSNPEAPINPS), are a transit peptide targeting the chloroplast. Residues 1–37 (MESSGDKQTSSLYPTVDTSNPEAPINPSSSSSTNNLY) form a disordered region. Residues 19 to 37 (SNPEAPINPSSSSSTNNLY) are compositionally biased toward low complexity. Positions 258-426 (IATGSGHLIK…AWVAFKIRKA (169 aa)) constitute a Senescence domain.

Its subcellular location is the plastid. The protein resides in the chloroplast. The chain is Protein EARLY-RESPONSIVE TO DEHYDRATION 7, chloroplastic from Arabidopsis thaliana (Mouse-ear cress).